Here is a 196-residue protein sequence, read N- to C-terminus: dTTP/UTP pyrophosphatase (196 aa).

D76 functions as the Proton acceptor in the catalytic mechanism.

The protein belongs to the Maf family. YhdE subfamily. The cofactor is a divalent metal cation.

Its subcellular location is the cytoplasm. The catalysed reaction is dTTP + H2O = dTMP + diphosphate + H(+). The enzyme catalyses UTP + H2O = UMP + diphosphate + H(+). Its function is as follows. Nucleoside triphosphate pyrophosphatase that hydrolyzes dTTP and UTP. May have a dual role in cell division arrest and in preventing the incorporation of modified nucleotides into cellular nucleic acids. This is dTTP/UTP pyrophosphatase from Chlorobium chlorochromatii (strain CaD3).